A 96-amino-acid polypeptide reads, in one-letter code: Large ribosomal subunit protein uL23 (96 aa).

This sequence belongs to the universal ribosomal protein uL23 family. In terms of assembly, part of the 50S ribosomal subunit. Contacts protein L29, and trigger factor when it is bound to the ribosome.

One of the early assembly proteins it binds 23S rRNA. One of the proteins that surrounds the polypeptide exit tunnel on the outside of the ribosome. Forms the main docking site for trigger factor binding to the ribosome. In Syntrophus aciditrophicus (strain SB), this protein is Large ribosomal subunit protein uL23.